We begin with the raw amino-acid sequence, 166 residues long: Putative universal stress protein SA1532 (166 aa).

It belongs to the universal stress protein A family.

Its subcellular location is the cytoplasm. The chain is Putative universal stress protein SA1532 from Staphylococcus aureus (strain N315).